A 503-amino-acid chain; its full sequence is von Willebrand factor A domain-containing protein 1 (503 aa).

A signal peptide spans 1-21 (MEVRKALTCVFLTVFLCSGDA). Residues 36 to 213 (DVLFLLDSSG…IIGEDLRNSI (178 aa)) enclose the VWFA domain. 2 consecutive Fibronectin type-III domains span residues 218 to 324 (RAER…TVNP) and 331 to 423 (LLSS…VLPA).

Homodimer or homomultimer; disulfide-linked.

The protein resides in the secreted. It localises to the extracellular space. It is found in the extracellular matrix. Its subcellular location is the basement membrane. Its function is as follows. Promotes matrix assembly. Involved in the organization of skeletal muscles and in the formation of neuromuscular junctions. This is von Willebrand factor A domain-containing protein 1 from Danio rerio (Zebrafish).